The primary structure comprises 357 residues: Peptide chain release factor 1 (357 aa).

Q233 bears the N5-methylglutamine mark.

The protein belongs to the prokaryotic/mitochondrial release factor family. Post-translationally, methylated by PrmC. Methylation increases the termination efficiency of RF1.

It is found in the cytoplasm. Peptide chain release factor 1 directs the termination of translation in response to the peptide chain termination codons UAG and UAA. The chain is Peptide chain release factor 1 from Syntrophus aciditrophicus (strain SB).